Consider the following 142-residue polypeptide: Putative transcriptional regulatory protein PF0535 (142 aa).

It belongs to the Tfx family.

Putative transcriptional regulator. This chain is Putative transcriptional regulatory protein PF0535, found in Pyrococcus furiosus (strain ATCC 43587 / DSM 3638 / JCM 8422 / Vc1).